A 362-amino-acid chain; its full sequence is 3-dehydroquinate synthase (362 aa).

NAD(+)-binding positions include 71 to 76 (DGEQYK), 105 to 109 (GVVGD), 129 to 130 (TT), Lys-142, Lys-151, and 169 to 172 (CLKT). Residues Glu-184, His-247, and His-264 each coordinate Zn(2+).

Belongs to the sugar phosphate cyclases superfamily. Dehydroquinate synthase family. Co(2+) serves as cofactor. Zn(2+) is required as a cofactor. Requires NAD(+) as cofactor.

Its subcellular location is the cytoplasm. The enzyme catalyses 7-phospho-2-dehydro-3-deoxy-D-arabino-heptonate = 3-dehydroquinate + phosphate. It participates in metabolic intermediate biosynthesis; chorismate biosynthesis; chorismate from D-erythrose 4-phosphate and phosphoenolpyruvate: step 2/7. Its function is as follows. Catalyzes the conversion of 3-deoxy-D-arabino-heptulosonate 7-phosphate (DAHP) to dehydroquinate (DHQ). This chain is 3-dehydroquinate synthase, found in Escherichia coli O127:H6 (strain E2348/69 / EPEC).